Here is a 787-residue protein sequence, read N- to C-terminus: uncharacterized protein (787 aa).

Residue M1 is modified to N-acetylmethionine. Disordered stretches follow at residues M1 to K115, T130 to E200, and V217 to D238. Residues V36–T54 show a composition bias toward polar residues. A Phosphoserine modification is found at S63. Over residues T130–H142 the composition is skewed to polar residues. Residues S160–T169 are compositionally biased toward low complexity. Residues T170–S184 show a composition bias toward basic and acidic residues. Residues S218–N230 are compositionally biased toward low complexity. Residues S254, S313, S342, S345, S390, S477, S492, S546, S683, and S699 each carry the phosphoserine modification.

It localises to the cytoplasm. This is an uncharacterized protein from Saccharomyces cerevisiae (strain ATCC 204508 / S288c) (Baker's yeast).